Reading from the N-terminus, the 199-residue chain is MARCKS-related protein (199 aa).

The tract at residues 1-199 (MGSQSSKAPR…GPASASAENE (199 aa)) is disordered. Glycine 2 is lipidated: N-myristoyl glycine. Threonine 14 is subject to Phosphothreonine. Low complexity predominate over residues 16–26 (EEAAGASPAKA). A phosphoserine mark is found at serine 22, serine 36, and serine 48. A compositionally biased stretch (low complexity) spans 53–64 (GADEAAGATGDA). At serine 71 the chain carries Phosphoserine. A compositionally biased stretch (basic and acidic residues) spans 74 to 85 (AEAKGEVAPKET). Threonine 85 is subject to Phosphothreonine. Basic residues predominate over residues 86–98 (PKKKKKFSFKKPF). The interval 87-110 (KKKKKFSFKKPFKLSGLSFKRNRK) is effector domain involved in lipid-binding and calmodulin-binding. Serine 93, serine 101, and serine 104 each carry phosphoserine; by PKC. Serine 119 bears the Phosphoserine mark. A Phosphoserine; by MAPK8 modification is found at serine 120. Serine 132 and serine 135 each carry phosphoserine. Threonine 148 carries the post-translational modification Phosphothreonine; by MAPK8. Phosphoserine is present on residues serine 151, serine 162, and serine 165. The segment covering 175–199 (GPQAAEPSTPSGPESGPASASAENE) has biased composition (low complexity). Residue threonine 183 is modified to Phosphothreonine; by MAPK8.

The protein belongs to the MARCKS family. In terms of assembly, binds to filamentous actin (F-actin), but not to monomeric G-actin, independently of its phosphorylation status. Interacts with calmodulin. In terms of processing, phosphorylated. Phosphorylation at Ser-120 and Thr-183 is non-redundantly catalyzed by MAPK8 in vivo. Phosphorylation at Thr-148 is preferentially catalyzed by MAPK8 in vivo, but this modification can also be catalyzed by other kinases in the absence of MAPK8. May be phosphorylated by protein kinase C, which disrupts the interaction with calmodulin.

The protein localises to the cytoplasm. The protein resides in the cytoskeleton. It is found in the cell membrane. Functionally, controls cell movement by regulating actin cytoskeleton homeostasis and filopodium and lamellipodium formation. When unphosphorylated, induces cell migration. When phosphorylated by MAPK8, induces actin bundles formation and stabilization, thereby reducing actin plasticity, hence restricting cell movement, including neuronal migration. May be involved in coupling the protein kinase C and calmodulin signal transduction systems. The polypeptide is MARCKS-related protein (Marcksl1) (Rattus norvegicus (Rat)).